The following is a 198-amino-acid chain: ATP-dependent Clp protease proteolytic subunit (198 aa).

Ser98 (nucleophile) is an active-site residue. The active site involves His123.

Belongs to the peptidase S14 family. As to quaternary structure, fourteen ClpP subunits assemble into 2 heptameric rings which stack back to back to give a disk-like structure with a central cavity, resembling the structure of eukaryotic proteasomes.

The protein resides in the cytoplasm. It catalyses the reaction Hydrolysis of proteins to small peptides in the presence of ATP and magnesium. alpha-casein is the usual test substrate. In the absence of ATP, only oligopeptides shorter than five residues are hydrolyzed (such as succinyl-Leu-Tyr-|-NHMec, and Leu-Tyr-Leu-|-Tyr-Trp, in which cleavage of the -Tyr-|-Leu- and -Tyr-|-Trp bonds also occurs).. In terms of biological role, cleaves peptides in various proteins in a process that requires ATP hydrolysis. Has a chymotrypsin-like activity. Plays a major role in the degradation of misfolded proteins. This Halothermothrix orenii (strain H 168 / OCM 544 / DSM 9562) protein is ATP-dependent Clp protease proteolytic subunit.